The primary structure comprises 106 residues: UPF0122 protein Exig_1902 (106 aa).

It belongs to the UPF0122 family.

In terms of biological role, might take part in the signal recognition particle (SRP) pathway. This is inferred from the conservation of its genetic proximity to ftsY/ffh. May be a regulatory protein. The chain is UPF0122 protein Exig_1902 from Exiguobacterium sibiricum (strain DSM 17290 / CCUG 55495 / CIP 109462 / JCM 13490 / 255-15).